The primary structure comprises 662 residues: MSQRVSDQAMAEVIAETRTNSSSRRHGGGDDTPSLPYMHKVGAPPKQTLFQEIKHSFNETFFPDKPFGNFKDQSGSRKFVLGLQYIFPILEWGRHYDLKKFRGDFIAGLTIASLCIPQDLAYAKLANLDPWYGLYSSFVAPLVYAFMGTSRDIAIGPVAVVSLLLGTLLSNEISNTKSHDYLRLAFTATFFAGVTQMLLGVCRLGFLIDFLSHAAIVGFMAGAAITIGLQQLKGLLGIKDFTKNSDIVSVMHSVWSNVHHGWNWETILIGLSFLIFLLITKYIAKKNKKLFWVSAISPMICVIVSTFFVYITRADKRGVTIVKHIKSGVNPSSANEIFFHGKYLGAGVRVGVVAGLVALTEAMAIGRTFAAMKDYSIDGNKEMVAMGTMNIVGSLTSCYVTTGSFSRSAVNYMAGCKTAVSNIVMAIVVLLTLLVITPLFKYTPNAVLASIIIAAVVNLVNIEAMVLLWKIDKFDFVACMGAFFGVIFKSVEIGLLIAVAISFAKILLQVTRPRTAVLGKLPGTSVYRNIQQYPKAEQIPGMLIIRVDSAIYFSNSNYIKERILRWLIDEGAQRTESELPEIQHLIVEMSPVTDIDTSGIHAFEELYKTLQKREVQLMLANPGPVVIEKLHASNLAELIGEDKIFLTVADAVATYGPKTAAF.

The disordered stretch occupies residues 1 to 35 (MSQRVSDQAMAEVIAETRTNSSSRRHGGGDDTPSL). Transmembrane regions (helical) follow at residues 103 to 123 (GDFIAGLTIASLCIPQDLAYA), 128 to 148 (LDPWYGLYSSFVAPLVYAFMG), 153 to 173 (IAIGPVAVVSLLLGTLLSNEI), 182 to 202 (LRLAFTATFFAGVTQMLLGVC), 205 to 225 (GFLIDFLSHAAIVGFMAGAAI), 264 to 284 (WETILIGLSFLIFLLITKYIA), 291 to 311 (FWVSAISPMICVIVSTFFVYI), 346 to 366 (AGVRVGVVAGLVALTEAMAIG), 383 to 403 (MVAMGTMNIVGSLTSCYVTTG), 420 to 440 (VSNIVMAIVVLLTLLVITPLF), 447 to 467 (VLASIIIAAVVNLVNIEAMVL), and 481 to 501 (GAFFGVIFKSVEIGLLIAVAI). The 124-residue stretch at 532 to 655 (QYPKAEQIPG…LTVADAVATY (124 aa)) folds into the STAS domain.

Belongs to the SLC26A/SulP transporter (TC 2.A.53) family.

Its subcellular location is the membrane. In terms of biological role, high-affinity H(+)/sulfate cotransporter that mediates the uptake of sulfate by plant roots from low concentrations of sulfate in the soil solution. The chain is High affinity sulfate transporter 2 (ST2) from Stylosanthes hamata (Caribbean stylo).